Consider the following 457-residue polypeptide: Embryogenesis-associated protein EMB8 (457 aa).

The segment at 39 to 59 (KKPAAGACEEQDELTSGSAAR) is disordered. Positions 151 to 391 (PVLILLPGLT…LVVTPNGGHL (241 aa)) constitute an AB hydrolase-1 domain. Active-site charge relay system residues include Ser231, Asp361, and His390. Residues 438-447 (VDSVHTRETN) are compositionally biased toward basic and acidic residues. Positions 438 to 457 (VDSVHTRETNNYKSPIENVN) are disordered. A compositionally biased stretch (polar residues) spans 448–457 (NYKSPIENVN).

The protein belongs to the AB hydrolase superfamily. AB hydrolase 4 family.

This is Embryogenesis-associated protein EMB8 (EMB8) from Picea glauca (White spruce).